The primary structure comprises 218 residues: NAD(P)H-quinone oxidoreductase subunit I (218 aa).

2 consecutive 4Fe-4S ferredoxin-type domains span residues 55-84 (GRIH…VDWV) and 95-124 (RNYS…MTEE). Residues C64, C67, C70, C74, C104, C107, C110, and C114 each coordinate [4Fe-4S] cluster. Residues 179–218 (LRAGKLPSQIIKELQADKSEEEGKNNSSDMVPNKLNSTNK) are disordered. A compositionally biased stretch (basic and acidic residues) spans 192-202 (LQADKSEEEGK). Polar residues predominate over residues 203 to 218 (NNSSDMVPNKLNSTNK).

Belongs to the complex I 23 kDa subunit family. NDH-1 is composed of at least 11 different subunits. Requires [4Fe-4S] cluster as cofactor.

Its subcellular location is the cellular thylakoid membrane. The enzyme catalyses a plastoquinone + NADH + (n+1) H(+)(in) = a plastoquinol + NAD(+) + n H(+)(out). The catalysed reaction is a plastoquinone + NADPH + (n+1) H(+)(in) = a plastoquinol + NADP(+) + n H(+)(out). NDH-1 shuttles electrons from an unknown electron donor, via FMN and iron-sulfur (Fe-S) centers, to quinones in the respiratory and/or the photosynthetic chain. The immediate electron acceptor for the enzyme in this species is believed to be plastoquinone. Couples the redox reaction to proton translocation, and thus conserves the redox energy in a proton gradient. This is NAD(P)H-quinone oxidoreductase subunit I from Prochlorococcus marinus (strain NATL2A).